The chain runs to 69 residues: Large ribosomal subunit protein uL29 (69 aa).

It belongs to the universal ribosomal protein uL29 family.

This is Large ribosomal subunit protein uL29 from Staphylococcus saprophyticus subsp. saprophyticus (strain ATCC 15305 / DSM 20229 / NCIMB 8711 / NCTC 7292 / S-41).